Consider the following 186-residue polypeptide: Tail tubular protein A (186 aa).

This sequence belongs to the tail tubular protein gp11 family.

The protein resides in the virion. The catalysed reaction is alpha,alpha-trehalose + H2O = alpha-D-glucose + beta-D-glucose. Its function is as follows. Structural component of the tail, which functions as a receptor binding protein (RBP) and mediates the attachment to the host capsular exopolysaccharides. Displays a depolymerase activity that specifically degrades the polysaccharides of Klebsiella pneumoniae capsule, which allows the phage to reach the host cell membrane and bind the entry receptor. Hydrolyzes trehalose. The chain is Tail tubular protein A from Klebsiella phage KP34 (Bacteriophage KP34).